Consider the following 82-residue polypeptide: U10-myrmicitoxin-Mri1c (82 aa).

The signal sequence occupies residues 1–26; it reads MRLSYVSLTLAIIFVMAIVHAPETEA. Positions 27-52 are excised as a propeptide; that stretch reads KAYPEADAVGEASAVGEADAVGVADP. Ile81 is subject to Isoleucine amide.

Belongs to the formicidae venom precursor-01 superfamily. Expressed by the venom gland.

Its subcellular location is the secreted. Induces paralysis 5 minutes after injection into blowflies (L.caesar). In most cases is not lethal 24 hours after injection, but paralysis is irreversible. May have antimicrobial properties, like most ant linear peptides. The chain is U10-myrmicitoxin-Mri1c from Manica rubida (European giant red ant).